We begin with the raw amino-acid sequence, 322 residues long: Deoxyhypusine hydroxylase (322 aa).

HEAT-like PBS-type repeat units follow at residues 76–102 (LKHE…VLAD) and 109–135 (VRHE…YFKE). Positions 78, 79, 111, 112, 236, 237, 269, and 270 each coordinate Fe cation. Residues 267 to 293 (VRHEAAEALGSIATDDVLPVLKEHLKD) form an HEAT-like PBS-type 3 repeat.

The protein belongs to the deoxyhypusine hydroxylase family. Requires Fe(2+) as cofactor.

It is found in the cytoplasm. The protein resides in the nucleus. The catalysed reaction is [eIF5A protein]-deoxyhypusine + AH2 + O2 = [eIF5A protein]-hypusine + A + H2O. Its pathway is protein modification; eIF5A hypusination. Catalyzes the hydroxylation of the N(6)-(4-aminobutyl)-L-lysine intermediate to form hypusine, an essential post-translational modification only found in mature eIF-5A factor. This Kluyveromyces lactis (strain ATCC 8585 / CBS 2359 / DSM 70799 / NBRC 1267 / NRRL Y-1140 / WM37) (Yeast) protein is Deoxyhypusine hydroxylase.